The sequence spans 270 residues: Fluoride-specific ion channel FluC 1 (270 aa).

Helical transmembrane passes span 4–24 (IIILVVIGGAFGAMTREFIML), 35–55 (LDILVANVVACFLLGTVTALY), 67–87 (IIGTGMMGGVSTFSSFAYGSV), and 96–116 (AFLIAAAYVTVSVVAGYVAVL). Positions 74 and 77 each coordinate Na(+).

Belongs to the fluoride channel Fluc/FEX (TC 1.A.43) family.

It is found in the cell inner membrane. It catalyses the reaction fluoride(in) = fluoride(out). Its activity is regulated as follows. Na(+) is not transported, but it plays an essential structural role and its presence is essential for fluoride channel function. Its function is as follows. Fluoride-specific ion channel. Important for reducing fluoride concentration in the cell, thus reducing its toxicity. The polypeptide is Fluoride-specific ion channel FluC 1 (Brucella abortus biovar 1 (strain 9-941)).